The sequence spans 506 residues: MEDLDALLADLQITTPPRCPVLLTDSPEKPQPTETRPPPPPYDPKTAMSNKTSDHETFPVDKDHLYSTVQKYPLPSVSPALGGGLCELDRLLNELNATQFNITDEIMSQFPTRDPSEQKAEAQKEAEKRALSASSATLELDRLMASLSDFHKQNTVSQEVEAPGAYKGSEEVSRPGDTEDLSSPRSTACVPKDLEDAPTPKSFKVVSAPGHLEVKTNQVNSDEVTASRVPDSVSGSKVPEATSVPRSDLDSMLVKLQSGLKQQGIETYSKGLCESCQRPIAGQVVTALGHTWHPEHFVCAHCHTLIGTSNFFEKDGRPYCEKDYFMLYAPRCALCELPIVQNMVTALGCTWHPEHFCCKVCKKPIGEEGFHEKDGEQYCSDDYFRLFGAVCAGCTEAVKESYISALGGLWHPQCFVCHVCHTPFINGSFFEHEGLPLCETHYHSRRGSLCAGCEQPITGRCVTAMGKKFHPQHLNCTFCLRQLNKGTFREHDEKPYCQACYARLYG.

The LD motif 1 signature appears at 3–15 (DLDALLADLQITT). The segment at 15 to 62 (TPPRCPVLLTDSPEKPQPTETRPPPPPYDPKTAMSNKTSDHETFPVDK) is disordered. Over residues 52-62 (TSDHETFPVDK) the composition is skewed to basic and acidic residues. Short sequence motifs (LD motif) lie at residues 87–99 (ELDR…NATQ) and 139–150 (ELDRLMASLSDF). Disordered regions lie at residues 154 to 201 (NTVS…PTPK) and 221 to 244 (SDEV…ATSV). Residues 168 to 177 (GSEEVSRPGD) are compositionally biased toward basic and acidic residues. The LD motif 4 signature appears at 248–260 (DLDSMLVKLQSGL). LIM zinc-binding domains are found at residues 271-330 (GLCE…LYAP), 331-388 (RCAL…RLFG), 389-448 (AVCA…RRGS), and 449-506 (LCAG…RLYG).

This sequence belongs to the paxillin family. In terms of assembly, interacts with tcf3 and tcf7l2.

The protein resides in the cell junction. It localises to the focal adhesion. The protein localises to the nucleus matrix. Its subcellular location is the cytoplasm. It is found in the cytoskeleton. In terms of biological role, functions as a molecular adapter coordinating multiple protein-protein interactions at the focal adhesion complex and in the nucleus. May regulate both Wnt and steroid signaling pathways and play a role in the processes of cell growth, proliferation, migration, differentiation and senescence. May have a zinc-dependent DNA-binding activity. The polypeptide is Transforming growth factor beta-1-induced transcript 1 protein (tgfb1i1) (Xenopus laevis (African clawed frog)).